The following is a 263-amino-acid chain: Putative replication protein PDa0002 (263 aa).

In Xylella fastidiosa (strain Temecula1 / ATCC 700964), this protein is Putative replication protein PDa0002.